The following is a 645-amino-acid chain: E3 ubiquitin-protein ligase ORTHRUS 2 (645 aa).

The segment at 12–63 adopts a PHD-type zinc-finger fold; it reads DGVCMRCKSNPPPEESLTCGTCVTPWHVSCLSSPPKTLASTLQWHCPDCSGE. The segment at 96–133 is disordered; the sequence is LSTEEKAKMRQRLLSGKGVEEDDEEEKRKKKGKGKNPN. Residues 146–185 form an RING-type 1 zinc finger; that stretch reads CSFCMQLPERPVTKPCGHNACLKCFEKWMGQGKRTCGKCR. The YDG domain occupies 273-422; sequence VRNQGLLVGE…FKVCRYLFVR (150 aa). The RING-type 2 zinc-finger motif lies at 518–575; it reads CQICQQVLTLPVTTPCAHNFCKACLEAKFAGKTLVRERSTGGRTLRSRKNVLNCPCCP. Positions 583 to 613 form a coiled coil; the sequence is QNPQVNREVAEVIEKLKTQEEDTAELEDEDE. The disordered stretch occupies residues 599–645; it reads KTQEEDTAELEDEDEGECSGTTPEEDSEQPKKRIKLDTDATVSATIR. The segment covering 603 to 625 has biased composition (acidic residues); the sequence is EDTAELEDEDEGECSGTTPEEDS. Residues 626–636 are compositionally biased toward basic and acidic residues; the sequence is EQPKKRIKLDT.

As to quaternary structure, interacts with histones CENH3, HTB2, HTR3 and H4. In terms of tissue distribution, mostly expressed in inflorescence and, to a lower extent, in leaves.

It localises to the nucleus. It carries out the reaction S-ubiquitinyl-[E2 ubiquitin-conjugating enzyme]-L-cysteine + [acceptor protein]-L-lysine = [E2 ubiquitin-conjugating enzyme]-L-cysteine + N(6)-ubiquitinyl-[acceptor protein]-L-lysine.. It functions in the pathway protein modification; protein ubiquitination. In terms of biological role, E3 ubiquitin-protein ligase. Participates in CpG methylation-dependent transcriptional regulation and epigenetic transcriptional silencing. Mediates ubiquitination with the E2 ubiquitin-conjugating enzyme UBC11. Promotes methylation-mediated gene silencing leading, for example, to early flowering. Associates with methylated DNA, and can bind to CpG, CpNpG, and CpNpN DNA motifs, with a strong preference for methylated forms, and with highest affinity for CpG substrate. Probably acts at the DNA methylation?histone interface to maintain centromeric heterochromatin. The protein is E3 ubiquitin-protein ligase ORTHRUS 2 (ORTH2) of Arabidopsis thaliana (Mouse-ear cress).